The chain runs to 774 residues: Pentatricopeptide repeat-containing protein At4g20770 (774 aa).

PPR repeat units follow at residues 5 to 39 (GNKY…GMKS), 40 to 70 (DTYL…MSVR), 71 to 101 (DVYS…MPER), 102 to 136 (DVVS…GFLP), 137 to 171 (SRFT…GLDK), 172 to 203 (NIFV…LSQP), 204 to 238 (NEVS…GVQV), 239 to 270 (DSVC…LGKQ), 283 to 313 (DLHL…MPEV), 314 to 348 (NVVS…GFQP), 349 to 379 (NEVT…IPQP), 380 to 414 (SVSA…NLKP), 415 to 449 (DKTT…EISK), 450 to 480 (NSHI…CINE), 482 to 516 (DIAC…AVLC), 518 to 552 (NETS…GYVS), 553 to 583 (DSFV…VLRK), 584 to 618 (NTVI…GEKP), 619 to 654 (DGIT…GIEP), and 655 to 685 (ELDH…TPYK). Positions 690-765 (LWEILLSSCR…TPGQSWTTYG (76 aa)) are type E motif.

This sequence belongs to the PPR family. PCMP-E subfamily.

The polypeptide is Pentatricopeptide repeat-containing protein At4g20770 (PCMP-E35) (Arabidopsis thaliana (Mouse-ear cress)).